Reading from the N-terminus, the 226-residue chain is ATP-dependent dethiobiotin synthetase BioD (226 aa).

Residue 12 to 17 (GVGKTV) coordinates ATP. T16 is a binding site for Mg(2+). The active site involves K37. Substrate is bound at residue T41. ATP is bound by residues D49, 108 to 111 (EGAG), 169 to 170 (GS), and 197 to 199 (PAG). D49 and E108 together coordinate Mg(2+).

The protein belongs to the dethiobiotin synthetase family. As to quaternary structure, homodimer. Mg(2+) serves as cofactor.

The protein localises to the cytoplasm. The catalysed reaction is (7R,8S)-7,8-diammoniononanoate + CO2 + ATP = (4R,5S)-dethiobiotin + ADP + phosphate + 3 H(+). It participates in cofactor biosynthesis; biotin biosynthesis; biotin from 7,8-diaminononanoate: step 1/2. Its function is as follows. Catalyzes a mechanistically unusual reaction, the ATP-dependent insertion of CO2 between the N7 and N8 nitrogen atoms of 7,8-diaminopelargonic acid (DAPA, also called 7,8-diammoniononanoate) to form a ureido ring. This Mycobacterium tuberculosis (strain ATCC 25177 / H37Ra) protein is ATP-dependent dethiobiotin synthetase BioD.